The sequence spans 346 residues: Archaeosine synthase subunit beta (346 aa).

One can recognise a Radical SAM core domain in the interval 36 to 276 (GVQTKTLTVI…LRQAKAAHPE (241 aa)). The [4Fe-4S] cluster site is built by Cys-51, Cys-59, and Cys-62.

This sequence belongs to the radical SAM superfamily. RaSEA family. Forms a robust complex with the archaeosine synthase alpha subunit ArcS. This complex likely consists of an alpha(2)beta(2) heterotetrameric structure. Requires [4Fe-4S] cluster as cofactor.

The catalysed reaction is 7-N-[(5S)-5-amino-5-carboxypentyl]formamidino-7-deazaguanosine(15) in tRNA + S-adenosyl-L-methionine = archaeosine(15) in tRNA + L-1-piperideine-6-carboxylate + 5'-deoxyadenosine + L-methionine + 2 H(+). The protein operates within tRNA modification; archaeosine-tRNA biosynthesis. In terms of biological role, radical SAM enzyme involved in the synthesis of archaeosine, a modified nucleoside present in the dihydrouridine loop (D-loop) of archaeal tRNAs. Catalyzes the cleavage of the C(epsilon)-N bond of the lysine moiety of q0kN15-tRNA, leading to the formation of archaeosine at position 15 in tRNAs. The protein is Archaeosine synthase subunit beta of Methanosarcina acetivorans (strain ATCC 35395 / DSM 2834 / JCM 12185 / C2A).